A 244-amino-acid polypeptide reads, in one-letter code: Putative lipoprotein LprA (244 aa).

An N-terminal signal peptide occupies residues 1–24 (MKHPPCSVVAAATAILAVVLAIGG). A lipid anchor (N-palmitoyl cysteine) is attached at Cys25. Cys25 is lipidated: S-diacylglycerol cysteine.

The protein belongs to the LppX/LprAFG lipoprotein family.

The protein localises to the cell membrane. In Mycobacterium tuberculosis (strain CDC 1551 / Oshkosh), this protein is Putative lipoprotein LprA (lprA).